The following is a 206-amino-acid chain: Dephospho-CoA kinase (206 aa).

The DPCK domain occupies 4 to 200 (IVALTGGIGS…HRYLKLATAA (197 aa)). 12 to 17 (GSGKST) provides a ligand contact to ATP.

It belongs to the CoaE family.

The protein localises to the cytoplasm. The enzyme catalyses 3'-dephospho-CoA + ATP = ADP + CoA + H(+). Its pathway is cofactor biosynthesis; coenzyme A biosynthesis; CoA from (R)-pantothenate: step 5/5. In terms of biological role, catalyzes the phosphorylation of the 3'-hydroxyl group of dephosphocoenzyme A to form coenzyme A. This is Dephospho-CoA kinase from Yersinia pestis.